A 939-amino-acid polypeptide reads, in one-letter code: UvrABC system protein A (939 aa).

32–39 (GLSGSGKS) lines the ATP pocket. The C4-type zinc-finger motif lies at 252-279 (CADCGISIDELAPRMFSFNSPFGKCERC). ABC transporter domains are found at residues 309–588 (WGDS…ENSL) and 608–936 (GNGN…KYLK). ATP is bound at residue 640-647 (GVSGSGKS). The C4-type zinc-finger motif lies at 739–765 (CEACSGDGIIKIEMQFLSDVYVPCEVC).

This sequence belongs to the ABC transporter superfamily. UvrA family. Forms a heterotetramer with UvrB during the search for lesions.

It localises to the cytoplasm. The UvrABC repair system catalyzes the recognition and processing of DNA lesions. UvrA is an ATPase and a DNA-binding protein. A damage recognition complex composed of 2 UvrA and 2 UvrB subunits scans DNA for abnormalities. When the presence of a lesion has been verified by UvrB, the UvrA molecules dissociate. The polypeptide is UvrABC system protein A (Clostridium perfringens (strain 13 / Type A)).